Reading from the N-terminus, the 320-residue chain is Apolipoprotein E (320 aa).

An N-terminal signal peptide occupies residues 1–18 (MKVLWAALLVAFLAGCQG). 8 repeat units span residues 82-103 (ALMD…EQLS), 104-125 (PVAE…ARLG), 126-147 (ADME…AMLG), 148-169 (QSTE…KRLL), 170-191 (RDVD…EGAE), 192-213 (RGVS…ARAA), 214-236 (TVGS…ERLR), and 237-258 (ARME…EQVE). The 8 X 22 AA approximate tandem repeats stretch occupies residues 82–258 (ALMDETMKEL…RLDEVKEQVE (177 aa)). At Met-145 the chain carries Methionine sulfoxide. Position 149 is a phosphoserine (Ser-149). The LDL and other lipoprotein receptors binding stretch occupies residues 160 to 170 (HLRKLRKRLLR). 164-167 (LRKR) is a binding site for heparin. Residues 212-293 (AATVGSSLAG…SWFEPLVEDM (82 aa)) form a lipid-binding and lipoprotein association region. Residue 232–239 (GERLRARM) coordinates heparin. The tract at residues 269 to 320 (QQMRLQAEAFQARLKSWFEPLVEDMQRQWAGLVEKVQAAVGASAAPVPSDNH) is homooligomerization. Residues 281 to 293 (RLKSWFEPLVEDM) form a specificity for association with VLDL region.

This sequence belongs to the apolipoprotein A1/A4/E family. In terms of assembly, homotetramer. May interact with ABCA1; functionally associated with ABCA1 in the biogenesis of HDLs. May interact with APP/A4 amyloid-beta peptide; the interaction is extremely stable in vitro but its physiological significance is unclear. May interact with MAPT. May interact with MAP2. In the cerebrospinal fluid, interacts with secreted SORL1. Interacts with PMEL; this allows the loading of PMEL luminal fragment on ILVs to induce fibril nucleation. Post-translationally, APOE exists as multiple glycosylated and sialylated glycoforms within cells and in plasma. The extent of glycosylation and sialylation are tissue and context specific. Glycated in plasma VLDL. In terms of processing, phosphorylated by FAM20C in the extracellular medium.

The protein localises to the secreted. It is found in the extracellular space. Its subcellular location is the extracellular matrix. It localises to the extracellular vesicle. The protein resides in the endosome. The protein localises to the multivesicular body. Functionally, APOE is an apolipoprotein, a protein associating with lipid particles, that mainly functions in lipoprotein-mediated lipid transport between organs via the plasma and interstitial fluids. APOE is a core component of plasma lipoproteins and is involved in their production, conversion and clearance. Apolipoproteins are amphipathic molecules that interact both with lipids of the lipoprotein particle core and the aqueous environment of the plasma. As such, APOE associates with chylomicrons, chylomicron remnants, very low density lipoproteins (VLDL) and intermediate density lipoproteins (IDL) but shows a preferential binding to high-density lipoproteins (HDL). It also binds a wide range of cellular receptors including the LDL receptor/LDLR, the LDL receptor-related proteins LRP1, LRP2 and LRP8 and the very low-density lipoprotein receptor/VLDLR that mediate the cellular uptake of the APOE-containing lipoprotein particles. Finally, APOE also has a heparin-binding activity and binds heparan-sulfate proteoglycans on the surface of cells, a property that supports the capture and the receptor-mediated uptake of APOE-containing lipoproteins by cells. A main function of APOE is to mediate lipoprotein clearance through the uptake of chylomicrons, VLDLs, and HDLs by hepatocytes. APOE is also involved in the biosynthesis by the liver of VLDLs as well as their uptake by peripheral tissues ensuring the delivery of triglycerides and energy storage in muscle, heart and adipose tissues. By participating in the lipoprotein-mediated distribution of lipids among tissues, APOE plays a critical role in plasma and tissues lipid homeostasis. APOE is also involved in two steps of reverse cholesterol transport, the HDLs-mediated transport of cholesterol from peripheral tissues to the liver, and thereby plays an important role in cholesterol homeostasis. First, it is functionally associated with ABCA1 in the biogenesis of HDLs in tissues. Second, it is enriched in circulating HDLs and mediates their uptake by hepatocytes. APOE also plays an important role in lipid transport in the central nervous system, regulating neuron survival and sprouting. This is Apolipoprotein E (APOE) from Plecturocebus moloch (Dusky titi monkey).